The following is a 243-amino-acid chain: Large ribosomal subunit protein uL2 (243 aa).

The interval His-202–Arg-243 is disordered. A compositionally biased stretch (basic residues) spans Lys-233–Arg-243.

This sequence belongs to the universal ribosomal protein uL2 family. As to quaternary structure, part of the 50S ribosomal subunit. Forms a bridge to the 30S subunit in the 70S ribosome.

In terms of biological role, one of the primary rRNA binding proteins. Required for association of the 30S and 50S subunits to form the 70S ribosome, for tRNA binding and peptide bond formation. It has been suggested to have peptidyltransferase activity; this is somewhat controversial. Makes several contacts with the 16S rRNA in the 70S ribosome. This is Large ribosomal subunit protein uL2 from Cenarchaeum symbiosum (strain A).